We begin with the raw amino-acid sequence, 249 residues long: Probable septum site-determining protein MinC (249 aa).

Positions 116–149 (AAVSPPPPPPPPPARAEPAAPVARPAPGRMQRNA) are disordered. A compositionally biased stretch (pro residues) spans 119 to 130 (SPPPPPPPPPAR). Residues 131-142 (AEPAAPVARPAP) show a composition bias toward low complexity.

Belongs to the MinC family. Interacts with MinD and FtsZ.

Functionally, cell division inhibitor that blocks the formation of polar Z ring septums. Rapidly oscillates between the poles of the cell to destabilize FtsZ filaments that have formed before they mature into polar Z rings. Prevents FtsZ polymerization. This Xanthomonas campestris pv. campestris (strain B100) protein is Probable septum site-determining protein MinC.